The following is a 117-amino-acid chain: Large ribosomal subunit protein bL19 (117 aa).

The protein belongs to the bacterial ribosomal protein bL19 family.

Its function is as follows. This protein is located at the 30S-50S ribosomal subunit interface and may play a role in the structure and function of the aminoacyl-tRNA binding site. The protein is Large ribosomal subunit protein bL19 of Leptothrix cholodnii (strain ATCC 51168 / LMG 8142 / SP-6) (Leptothrix discophora (strain SP-6)).